Reading from the N-terminus, the 275-residue chain is Polyamine aminopropyltransferase (275 aa).

Residues 2-235 (DLWLREGQIE…GFWSFTIGSK (234 aa)) enclose the PABS domain. Gln31 is a binding site for S-methyl-5'-thioadenosine. His62 and Asp86 together coordinate spermidine. Residues Glu106 and 137 to 138 (DG) contribute to the S-methyl-5'-thioadenosine site. Asp155 acts as the Proton acceptor in catalysis. 155–158 (DSTD) is a spermidine binding site.

The protein belongs to the spermidine/spermine synthase family. In terms of assembly, homodimer or homotetramer.

Its subcellular location is the cytoplasm. It carries out the reaction S-adenosyl 3-(methylsulfanyl)propylamine + putrescine = S-methyl-5'-thioadenosine + spermidine + H(+). It functions in the pathway amine and polyamine biosynthesis; spermidine biosynthesis; spermidine from putrescine: step 1/1. Its function is as follows. Catalyzes the irreversible transfer of a propylamine group from the amino donor S-adenosylmethioninamine (decarboxy-AdoMet) to putrescine (1,4-diaminobutane) to yield spermidine. The protein is Polyamine aminopropyltransferase of Clostridium kluyveri (strain NBRC 12016).